The chain runs to 291 residues: 4-diphosphocytidyl-2-C-methyl-D-erythritol kinase (291 aa).

Lysine 14 is a catalytic residue. 96 to 106 contributes to the ATP binding site; sequence PFGAGLGGGSS. Residue aspartate 138 is part of the active site.

Belongs to the GHMP kinase family. IspE subfamily.

It carries out the reaction 4-CDP-2-C-methyl-D-erythritol + ATP = 4-CDP-2-C-methyl-D-erythritol 2-phosphate + ADP + H(+). The protein operates within isoprenoid biosynthesis; isopentenyl diphosphate biosynthesis via DXP pathway; isopentenyl diphosphate from 1-deoxy-D-xylulose 5-phosphate: step 3/6. In terms of biological role, catalyzes the phosphorylation of the position 2 hydroxy group of 4-diphosphocytidyl-2C-methyl-D-erythritol. This Chlorobium phaeovibrioides (strain DSM 265 / 1930) (Prosthecochloris vibrioformis (strain DSM 265)) protein is 4-diphosphocytidyl-2-C-methyl-D-erythritol kinase.